The following is a 93-amino-acid chain: MSGRRVYSTSVTGSREIKSQQSEVTRILDGKRIQYQLVDISQDNALRDEMRALAGNPKATPPQIVNGDQYCGDYELFVEAVEQNTLQEFLKLA.

Serine 2 is subject to N-acetylserine. Serine 2 is a glycosylation site (O-linked (GalNAc...) serine). One can recognise a Glutaredoxin domain in the interval 2 to 93 (SGRRVYSTSV…NTLQEFLKLA (92 aa)). O-linked (GalNAc...) threonine glycans are attached at residues threonine 9 and threonine 12.

The protein belongs to the SH3BGR family. In terms of assembly, homodimer. Interacts with MYO1C (via its IQ motifs); the interaction is dependent on calcium and takes place at membrane ruffles. May be glycosylated.

Its subcellular location is the cytoplasm. It localises to the cytosol. The protein localises to the cell projection. The protein resides in the ruffle membrane. It is found in the nucleus. Its function is as follows. Could act as a modulator of glutaredoxin biological activity. May play a role in cytoskeleton organization. The sequence is that of SH3 domain-binding glutamic acid-rich-like protein 3 (SH3BGRL3) from Pongo abelii (Sumatran orangutan).